The primary structure comprises 250 residues: rRNA methyltransferase 2, mitochondrial (250 aa).

A mitochondrion-targeting transit peptide spans 1-35 (MRLVFTGNCVFKRLLHTEIGGKYAKQQPRNLKGRS). S-adenosyl-L-methionine contacts are provided by residues 90-93 (PGSW), Asp-119, 136-137 (DF), and Asp-161. Lys-201 functions as the Proton acceptor in the catalytic mechanism.

The protein belongs to the class I-like SAM-binding methyltransferase superfamily. RNA methyltransferase RlmE family.

Its subcellular location is the mitochondrion. It catalyses the reaction a uridine in rRNA + S-adenosyl-L-methionine = a 2'-O-methyluridine in rRNA + S-adenosyl-L-homocysteine + H(+). Functionally, S-adenosyl-L-methionine-dependent 2'-O-ribose methyltransferase that catalyzes the formation of 2'-O-methyluridine at position 1579 (Um1579) in the mitochondrial large subunit ribosomal RNA (mtLSU rRNA), a universally conserved modification in the peptidyl transferase domain of the mtLSU rRNA. This activity may require prior 2'-O-methylguanosine modification at position 1580 (Gm1580) by MRM3. Essential for late-stage assembly of mtLSU required for efficient translation of mitochondrial DNA encoded proteins; methyltransferase activity is not required for this function. Essential for mitochondrial respiratory function. In Drosophila melanogaster (Fruit fly), this protein is rRNA methyltransferase 2, mitochondrial.